The following is a 676-amino-acid chain: MTDPGYVEFPGSPFQLFQPYAPAGDQPAAIEGLVQGVADGLMYQTLLGVTGSGKTFTMANVIARLGRPALVLAPNKTLAAQLYAEMRDFFPKNAVEYFVSYYDYYQPEAYVPTRDLFIEKDSSVNEHIEQMRLSATKSLLERRDTIIVGTVSCIYGIGNPGDYHAMVLILRAGDRISRREVLARLVAMQYTRNDADFTRGAFRVRGETIDIFPAESPELALRLTLFDDEVETLELFDPLTGKVRQKLPRFTVYPGSHYVTPRETVLRAIETIREELRERLSTFTNEGKLLEAQRIEQRTRFDLEMLQELGFCKGIENYSRHLSGAAPGEPPPTLIDYLPADALMFIDESHVTVGQLGGMYRGDRARKETLVQYGFRLPSALDNRPLRLEEFEARMRQCVFVSATPADYERQHADNVVEQVVRPTGLVDPEVEVRPAHTQVDDLLGEIRHRVARQERVLVTTLTKRMSEDLTDFLAEHGVRVRYLHSDIDTVERVEIIRDLRLGVFDVLVGINLLREGLDIPEVSLVAILDADKEGFLRSERSLIQTIGRAARNLHGHAILYADRITDSMRRAMDETSRRRSKQLQHNADHGITARGVNKAVRELIDGVMAPATTHDALEDAVPLAALTDEKAMAREIKRLEKLMMDHARNLEFEQAAAARDALTALKNRLLLDGVR.

Residues 35-192 (QGVADGLMYQ…ARLVAMQYTR (158 aa)) enclose the Helicase ATP-binding domain. 48–55 (GVTGSGKT) lines the ATP pocket. The Beta-hairpin motif lies at 101–124 (YYDYYQPEAYVPTRDLFIEKDSSV). The region spanning 439-605 (QVDDLLGEIR…GVNKAVRELI (167 aa)) is the Helicase C-terminal domain. Residues 634 to 669 (AREIKRLEKLMMDHARNLEFEQAAAARDALTALKNR) form the UVR domain.

It belongs to the UvrB family. As to quaternary structure, forms a heterotetramer with UvrA during the search for lesions. Interacts with UvrC in an incision complex.

The protein resides in the cytoplasm. The UvrABC repair system catalyzes the recognition and processing of DNA lesions. A damage recognition complex composed of 2 UvrA and 2 UvrB subunits scans DNA for abnormalities. Upon binding of the UvrA(2)B(2) complex to a putative damaged site, the DNA wraps around one UvrB monomer. DNA wrap is dependent on ATP binding by UvrB and probably causes local melting of the DNA helix, facilitating insertion of UvrB beta-hairpin between the DNA strands. Then UvrB probes one DNA strand for the presence of a lesion. If a lesion is found the UvrA subunits dissociate and the UvrB-DNA preincision complex is formed. This complex is subsequently bound by UvrC and the second UvrB is released. If no lesion is found, the DNA wraps around the other UvrB subunit that will check the other stand for damage. The polypeptide is UvrABC system protein B (Bordetella avium (strain 197N)).